The following is a 189-amino-acid chain: Potassium-transporting ATPase KdpC subunit (189 aa).

The helical transmembrane segment at valine 10–isoleucine 30 threads the bilayer.

It belongs to the KdpC family. As to quaternary structure, the system is composed of three essential subunits: KdpA, KdpB and KdpC.

Its subcellular location is the cell inner membrane. Its function is as follows. Part of the high-affinity ATP-driven potassium transport (or Kdp) system, which catalyzes the hydrolysis of ATP coupled with the electrogenic transport of potassium into the cytoplasm. This subunit acts as a catalytic chaperone that increases the ATP-binding affinity of the ATP-hydrolyzing subunit KdpB by the formation of a transient KdpB/KdpC/ATP ternary complex. The chain is Potassium-transporting ATPase KdpC subunit from Janthinobacterium sp. (strain Marseille) (Minibacterium massiliensis).